We begin with the raw amino-acid sequence, 732 residues long: Inducible ornithine decarboxylase (732 aa).

Lys-355 is subject to N6-(pyridoxal phosphate)lysine.

Belongs to the Orn/Lys/Arg decarboxylase class-I family. Pyridoxal 5'-phosphate serves as cofactor.

The catalysed reaction is L-ornithine + H(+) = putrescine + CO2. It participates in amine and polyamine biosynthesis; putrescine biosynthesis via L-ornithine pathway; putrescine from L-ornithine: step 1/1. In terms of biological role, the first enzyme leading to putrescine and thus polyamine synthesis. The protein is Inducible ornithine decarboxylase of Escherichia coli (strain K12).